Reading from the N-terminus, the 210-residue chain is Large ribosomal subunit protein uL4 (210 aa).

Positions 44-79 (QHQGTHKVKTRSEVSGGGRKPYRQKGTGNARRGSSR) are disordered.

The protein belongs to the universal ribosomal protein uL4 family. As to quaternary structure, part of the 50S ribosomal subunit.

One of the primary rRNA binding proteins, this protein initially binds near the 5'-end of the 23S rRNA. It is important during the early stages of 50S assembly. It makes multiple contacts with different domains of the 23S rRNA in the assembled 50S subunit and ribosome. Functionally, forms part of the polypeptide exit tunnel. This Chloroherpeton thalassium (strain ATCC 35110 / GB-78) protein is Large ribosomal subunit protein uL4.